The sequence spans 338 residues: Ketol-acid reductoisomerase (NADP(+)) (338 aa).

The KARI N-terminal Rossmann domain occupies 1 to 181 (MKVFYDKDCD…GGGKAGIIET (181 aa)). Residues 24–27 (YGSQ), Arg47, and Ser52 each bind NADP(+). Residue His107 is part of the active site. Gly133 contributes to the NADP(+) binding site. One can recognise a KARI C-terminal knotted domain in the interval 182–327 (NFKEETETDL…AQLRAMMPWI (146 aa)). Residues Asp190, Glu194, Glu226, and Glu230 each coordinate Mg(2+). Ser251 contributes to the substrate binding site.

Belongs to the ketol-acid reductoisomerase family. It depends on Mg(2+) as a cofactor.

It catalyses the reaction (2R)-2,3-dihydroxy-3-methylbutanoate + NADP(+) = (2S)-2-acetolactate + NADPH + H(+). The enzyme catalyses (2R,3R)-2,3-dihydroxy-3-methylpentanoate + NADP(+) = (S)-2-ethyl-2-hydroxy-3-oxobutanoate + NADPH + H(+). It functions in the pathway amino-acid biosynthesis; L-isoleucine biosynthesis; L-isoleucine from 2-oxobutanoate: step 2/4. The protein operates within amino-acid biosynthesis; L-valine biosynthesis; L-valine from pyruvate: step 2/4. Involved in the biosynthesis of branched-chain amino acids (BCAA). Catalyzes an alkyl-migration followed by a ketol-acid reduction of (S)-2-acetolactate (S2AL) to yield (R)-2,3-dihydroxy-isovalerate. In the isomerase reaction, S2AL is rearranged via a Mg-dependent methyl migration to produce 3-hydroxy-3-methyl-2-ketobutyrate (HMKB). In the reductase reaction, this 2-ketoacid undergoes a metal-dependent reduction by NADPH to yield (R)-2,3-dihydroxy-isovalerate. The chain is Ketol-acid reductoisomerase (NADP(+)) from Acidovorax ebreus (strain TPSY) (Diaphorobacter sp. (strain TPSY)).